Here is a 454-residue protein sequence, read N- to C-terminus: Arginine biosynthesis bifunctional protein ArgJ, mitochondrial (454 aa).

Residues threonine 184, lysine 213, threonine 224, glutamate 311, asparagine 449, and threonine 454 each coordinate substrate. The active-site Nucleophile is the threonine 224.

The protein belongs to the ArgJ family. Heterodimer of an alpha and a beta chain. Post-translationally, the alpha and beta chains are autoproteolytically processed from a single precursor protein within the mitochondrion.

It localises to the mitochondrion matrix. The enzyme catalyses N(2)-acetyl-L-ornithine + L-glutamate = N-acetyl-L-glutamate + L-ornithine. The catalysed reaction is L-glutamate + acetyl-CoA = N-acetyl-L-glutamate + CoA + H(+). The protein operates within amino-acid biosynthesis; L-arginine biosynthesis; L-ornithine and N-acetyl-L-glutamate from L-glutamate and N(2)-acetyl-L-ornithine (cyclic): step 1/1. It participates in amino-acid biosynthesis; L-arginine biosynthesis; N(2)-acetyl-L-ornithine from L-glutamate: step 1/4. Catalyzes two activities which are involved in the cyclic version of arginine biosynthesis: the synthesis of acetylglutamate from glutamate and acetyl-CoA, and of ornithine by transacetylation between acetylornithine and glutamate. In Aspergillus clavatus (strain ATCC 1007 / CBS 513.65 / DSM 816 / NCTC 3887 / NRRL 1 / QM 1276 / 107), this protein is Arginine biosynthesis bifunctional protein ArgJ, mitochondrial.